Here is a 38-residue protein sequence, read N- to C-terminus: Potassium channel toxin alpha-KTx 3.2 (38 aa).

Cystine bridges form between cysteine 8–cysteine 28, cysteine 14–cysteine 33, and cysteine 18–cysteine 35.

The protein belongs to the short scorpion toxin superfamily. Potassium channel inhibitor family. Alpha-KTx 03 subfamily. In terms of tissue distribution, expressed by the venom gland.

The protein resides in the secreted. In terms of biological role, potent inhibitor of the Shaker potassium channels and its mammalian homologs (Kv1.1/KCNA1, Kv1.3/KCNA3, Kv1.6/KCNA6) (Ki&lt;1 nM for all channels). Also blocks Kv1.2/KCNA2 (IC(50)=26.8 nM). It also shows a weak interaction with nicotinic acetylcholine receptors (nAChR), suggesting it may weakly inhibit it. The protein is Potassium channel toxin alpha-KTx 3.2 of Leiurus hebraeus (Hebrew deathstalker scorpion).